The following is a 142-amino-acid chain: Large ribosomal subunit protein uL13 (142 aa).

This sequence belongs to the universal ribosomal protein uL13 family. Part of the 50S ribosomal subunit.

Functionally, this protein is one of the early assembly proteins of the 50S ribosomal subunit, although it is not seen to bind rRNA by itself. It is important during the early stages of 50S assembly. This Pyrococcus furiosus (strain ATCC 43587 / DSM 3638 / JCM 8422 / Vc1) protein is Large ribosomal subunit protein uL13.